Reading from the N-terminus, the 776-residue chain is Calcium-independent phospholipase A2-gamma (776 aa).

Residues asparagine 4 and asparagine 157 are each glycosylated (N-linked (GlcNAc...) asparagine). Disordered stretches follow at residues 216–276 (KGKM…HPVS) and 306–334 (KLKSDPKSPPEEQEVSAKTEQAVNKDKKA). Basic and acidic residues-rich tracts occupy residues 221–239 (QTKEDKQLQDKPDLEERKS) and 247–263 (VADRPDSESPLEVKDKL). The 196-residue stretch at 439–634 (LTIDGGGTRG…LLNNPSALAL (196 aa)) folds into the PNPLA domain. Residues 443–448 (GGGTRG) carry the GXGXXG motif. The chain crosses the membrane as a helical span at residues 469 to 489 (LFDYICGVSTGAILAFMLGLF). The short motif at 475-479 (GVSTG) is the GXSXG element. Residue serine 477 is the Nucleophile of the active site. Residue aspartate 621 is the Proton acceptor of the active site. The short motif at 621 to 623 (DGG) is the DGA/G element. Lysine 730 carries the post-translational modification N6-succinyllysine.

In terms of tissue distribution, expressed in myocardium (at protein level).

It localises to the endoplasmic reticulum membrane. The protein resides in the mitochondrion membrane. Its subcellular location is the peroxisome membrane. The catalysed reaction is a 1,2-diacyl-sn-glycero-3-phosphocholine + H2O = a 1-acyl-sn-glycero-3-phosphocholine + a fatty acid + H(+). It carries out the reaction a 1,2-diacyl-sn-glycero-3-phosphocholine + H2O = a 2-acyl-sn-glycero-3-phosphocholine + a fatty acid + H(+). The enzyme catalyses a 1,2-diacyl-sn-glycero-3-phosphoethanolamine + H2O = a 1-acyl-sn-glycero-3-phosphoethanolamine + a fatty acid + H(+). It catalyses the reaction a 1-O-(1Z-alkenyl)-2-acyl-sn-glycero-3-phosphocholine + H2O = a 1-O-(1Z-alkenyl)-sn-glycero-3-phosphocholine + a fatty acid + H(+). The catalysed reaction is a 1-acyl-sn-glycero-3-phosphocholine + H2O = sn-glycerol 3-phosphocholine + a fatty acid + H(+). It carries out the reaction 1-hexadecanoyl-2-(5Z,8Z,11Z,14Z-eicosatetraenoyl)-sn-glycero-3-phosphocholine + H2O = 2-(5Z,8Z,11Z,14Z)-eicosatetraenoyl-sn-glycero-3-phosphocholine + hexadecanoate + H(+). The enzyme catalyses 1-acyl-2-(9Z,12Z)-octadecadienoyl-sn-glycero-3-phosphocholine + H2O = a 1-acyl-sn-glycero-3-phosphocholine + (9Z,12Z)-octadecadienoate + H(+). It catalyses the reaction 1-acyl-2-(5Z,8Z,11Z,14Z-eicosatetraenoyl)-sn-glycero-3-phosphocholine + H2O = a 1-acyl-sn-glycero-3-phosphocholine + (5Z,8Z,11Z,14Z)-eicosatetraenoate + H(+). The catalysed reaction is 1-hexadecanoyl-2-(5Z,8Z,11Z,14Z-eicosatetraenoyl)-sn-glycero-3-phosphocholine + H2O = 1-hexadecanoyl-sn-glycero-3-phosphocholine + (5Z,8Z,11Z,14Z)-eicosatetraenoate + H(+). It carries out the reaction 1-octadecanoyl-2-(9Z-octadecenoyl)-sn-glycero-3-phosphocholine + H2O = 1-octadecanoyl-sn-glycero-3-phosphocholine + (9Z)-octadecenoate + H(+). The enzyme catalyses 1-hexadecanoyl-2-(9Z-octadecenoyl)-sn-glycero-3-phosphocholine + H2O = 1-hexadecanoyl-sn-glycero-3-phosphocholine + (9Z)-octadecenoate + H(+). It catalyses the reaction 1-hexadecanoyl-2-(9Z,12Z-octadecadienoyl)-sn-glycero-3-phosphocholine + H2O = (9Z,12Z)-octadecadienoate + 1-hexadecanoyl-sn-glycero-3-phosphocholine + H(+). The catalysed reaction is 1-acyl-2-(9Z,12Z)-octadecadienoyl-sn-glycero-3-phosphoethanolamine + H2O = a 1-acyl-sn-glycero-3-phosphoethanolamine + (9Z,12Z)-octadecadienoate + H(+). It carries out the reaction 1-acyl-2-(5Z,8Z,11Z,14Z)-eicosatetraenoyl-sn-glycero-3-phosphoethanolamine + H2O = a 1-acyl-sn-glycero-3-phosphoethanolamine + (5Z,8Z,11Z,14Z)-eicosatetraenoate + H(+). The enzyme catalyses 1-hexadecanoyl-2-(5Z,8Z,11Z,14Z-eicosatetraenoyl)-sn-glycero-3-phosphoethanolamine + H2O = 1-hexadecanoyl-sn-glycero-3-phosphoethanolamine + (5Z,8Z,11Z,14Z)-eicosatetraenoate + H(+). It catalyses the reaction 1-octadecanoyl-2-(9Z-octadecenoyl)-sn-glycero-3-phosphocholine + H2O = 2-(9Z-octadecenoyl)-sn-glycero-3-phosphocholine + octadecanoate + H(+). The catalysed reaction is 1-hexadecanoyl-2-(4Z,7Z,10Z,13Z,16Z,19Z-docosahexaenoyl)-sn-glycero-3-phosphocholine + H2O = 2-(4Z,7Z,10Z,13Z,16Z,19Z-docosahexaenoyl)-sn-glycero-3-phosphocholine + hexadecanoate + H(+). It carries out the reaction 1-O-(1Z)-hexadecenyl-2 (5Z,8Z,11Z,14Z)-eicosatetraenoyl-sn-glycero-3-phosphocholine + H2O = 1-(1Z-hexadecenyl)-sn-glycero-3-phosphocholine + (5Z,8Z,11Z,14Z)-eicosatetraenoate + H(+). The enzyme catalyses 1-O-(1Z-hexadecenyl)-2-(9Z-octadecenoyl)-sn-glycero-3-phosphocholine + H2O = 1-(1Z-hexadecenyl)-sn-glycero-3-phosphocholine + (9Z)-octadecenoate + H(+). It catalyses the reaction 1-hexadecanoyl-sn-glycero-3-phosphocholine + H2O = sn-glycerol 3-phosphocholine + hexadecanoate + H(+). The catalysed reaction is 1',3'-bis-[1,2-di-(9Z,12Z-octadecadienoyl)-sn-glycero-3-phospho]-glycerol + H2O = 1'-[1,2-di-(9Z,12Z-octadecadienoyl)-sn-glycero-3-phospho]-3'-[1-(9Z,12Z-octadecadienoyl)-sn-glycero-3-phospho]-glycerol + (9Z,12Z)-octadecadienoate + H(+). It carries out the reaction 1'-[1-acyl-2-(9-hydroxy-(10E,12Z)-octadecadienoyl)-sn-glycero-3-phospho]-3'-[1,2-diacyl-sn-glycero-3-phospho]-glycerol + H2O = 9-hydroxy-(10E,12Z)-octadecadienoate + 1'-[1,2-diacyl-sn-glycero-3-phospho],3'-[1-acyl-sn-glycero-3-phospho]-glycerol + H(+). The protein operates within phospholipid metabolism. Calcium-independent phospholipase. Functionally, calcium-independent and membrane-bound phospholipase, that catalyzes the esterolytic cleavage of fatty acids from glycerophospholipids to yield free fatty acids and lysophospholipids, hence regulating membrane physical properties and the release of lipid second messengers and growth factors. Hydrolyzes phosphatidylethanolamine, phosphatidylcholine and probably phosphatidylinositol with a possible preference for the former. Also has a broad substrate specificity in terms of fatty acid moieties, hydrolyzing saturated and mono-unsaturated fatty acids at nearly equal rates from either the sn-1 or sn-2 position in diacyl phosphatidylcholine. However, has a weak activity toward polyunsaturated fatty acids at the sn-2 position, and thereby favors the production of 2-arachidonoyl lysophosphatidylcholine, a key branch point metabolite in eicosanoid signaling. On the other hand, can produce arachidonic acid from the sn-1 position of diacyl phospholipid and from the sn-2 position of arachidonate-containing plasmalogen substrates. Therefore, plays an important role in the mobilization of arachidonic acid in response to cellular stimuli and the generation of lipid second messengers. Can also hydrolyze lysophosphatidylcholine. In the mitochondrial compartment, catalyzes the hydrolysis and release of oxidized aliphatic chains from cardiolipin and integrates mitochondrial bioenergetics and signaling. It is essential for maintaining efficient bioenergetic mitochondrial function through tailoring mitochondrial membrane lipid metabolism and composition. This Mus musculus (Mouse) protein is Calcium-independent phospholipase A2-gamma.